The sequence spans 378 residues: Erythronate-4-phosphate dehydrogenase (378 aa).

Residues serine 45 and threonine 66 each coordinate substrate. Positions 146 and 175 each coordinate NAD(+). Arginine 208 is an active-site residue. Position 232 (aspartate 232) interacts with NAD(+). Glutamate 237 is an active-site residue. Histidine 254 serves as the catalytic Proton donor. Position 257 (glycine 257) interacts with NAD(+). Tyrosine 258 is a substrate binding site.

It belongs to the D-isomer specific 2-hydroxyacid dehydrogenase family. PdxB subfamily. In terms of assembly, homodimer.

Its subcellular location is the cytoplasm. The catalysed reaction is 4-phospho-D-erythronate + NAD(+) = (R)-3-hydroxy-2-oxo-4-phosphooxybutanoate + NADH + H(+). It participates in cofactor biosynthesis; pyridoxine 5'-phosphate biosynthesis; pyridoxine 5'-phosphate from D-erythrose 4-phosphate: step 2/5. Functionally, catalyzes the oxidation of erythronate-4-phosphate to 3-hydroxy-2-oxo-4-phosphonooxybutanoate. This is Erythronate-4-phosphate dehydrogenase from Escherichia coli (strain K12 / MC4100 / BW2952).